Consider the following 472-residue polypeptide: 3-isopropylmalate dehydratase large subunit (472 aa).

[4Fe-4S] cluster contacts are provided by cysteine 352, cysteine 413, and cysteine 416.

Belongs to the aconitase/IPM isomerase family. LeuC type 1 subfamily. Heterodimer of LeuC and LeuD. Requires [4Fe-4S] cluster as cofactor.

The enzyme catalyses (2R,3S)-3-isopropylmalate = (2S)-2-isopropylmalate. It functions in the pathway amino-acid biosynthesis; L-leucine biosynthesis; L-leucine from 3-methyl-2-oxobutanoate: step 2/4. Catalyzes the isomerization between 2-isopropylmalate and 3-isopropylmalate, via the formation of 2-isopropylmaleate. This is 3-isopropylmalate dehydratase large subunit from Pseudomonas fluorescens (strain ATCC BAA-477 / NRRL B-23932 / Pf-5).